Consider the following 239-residue polypeptide: UPF0173 metal-dependent hydrolase DVU_3308 (239 aa).

It belongs to the UPF0173 family.

This chain is UPF0173 metal-dependent hydrolase DVU_3308, found in Nitratidesulfovibrio vulgaris (strain ATCC 29579 / DSM 644 / CCUG 34227 / NCIMB 8303 / VKM B-1760 / Hildenborough) (Desulfovibrio vulgaris).